A 438-amino-acid polypeptide reads, in one-letter code: GRAS family protein TF80 (438 aa).

The GRAS domain maps to 13–436; that stretch reads LRYDSHGSNP…RPLFSVSAWK (424 aa). The segment at 20-81 is leucine repeat I (LRI); sequence SNPMIPLIEC…YKIVKHLPGV (62 aa). The interval 100-165 is VHIID; sequence QKYFYDLCPF…GGPPFLKITG (66 aa). The VHIID motif lies at 131–135; it reads VHIID. The leucine repeat II (LRII) stretch occupies residues 175-207; the sequence is QMSFHLTTEAGILDFPLQFNPIISKLEDVDFEN. Positions 216-359 are PFYRE; the sequence is VAISSVLQLH…SMLLGEQIKN (144 aa). The short motif at 224 to 228 is the LXXLL motif element; sequence LHSLL. An SAW region spans residues 362 to 436; it reads TCEGVDRKER…RPLFSVSAWK (75 aa).

This sequence belongs to the GRAS family. Interacts with RAM1.

Its subcellular location is the nucleus. The polypeptide is GRAS family protein TF80 (TF80) (Medicago truncatula (Barrel medic)).